We begin with the raw amino-acid sequence, 614 residues long: Putative ABC transporter ATP-binding protein MA_1747 (614 aa).

ABC transporter domains are found at residues 11–251 and 319–552; these read VRLE…KLGI and VLIE…AGLL. ATP is bound by residues 45–52 and 352–359; these read GPSGCGKS and GHNGAGKT.

It belongs to the ABC transporter superfamily.

The protein localises to the cell membrane. Functionally, probably part of an ABC transporter complex. Responsible for energy coupling to the transport system. This is Putative ABC transporter ATP-binding protein MA_1747 from Methanosarcina acetivorans (strain ATCC 35395 / DSM 2834 / JCM 12185 / C2A).